A 401-amino-acid chain; its full sequence is Riboflavin biosynthesis protein RibBA (401 aa).

Residues 1-203 (MTDFQFSKVE…IQQLQEYRRK (203 aa)) form a DHBP synthase region. D-ribulose 5-phosphate-binding positions include 30–31 (RE), Asp35, 142–146 (RNGHT), and Glu166. Mg(2+) is bound at residue Glu31. His145 is a binding site for Mg(2+). The segment at 204 to 401 (HDSLVKQISV…QIKMGHMFNF (198 aa)) is GTP cyclohydrolase II. A GTP-binding site is contributed by 254 to 258 (RIHSE). The Zn(2+) site is built by Cys259, Cys270, and Cys272. Residues Gln275, 297 to 299 (EGR), and Thr319 each bind GTP. Catalysis depends on Asp331, which acts as the Proton acceptor; for GTP cyclohydrolase activity. Arg333 (nucleophile; for GTP cyclohydrolase activity) is an active-site residue. GTP contacts are provided by Thr354 and Lys359.

The protein in the N-terminal section; belongs to the DHBP synthase family. In the C-terminal section; belongs to the GTP cyclohydrolase II family. Mg(2+) serves as cofactor. It depends on Mn(2+) as a cofactor. The cofactor is Zn(2+).

It catalyses the reaction D-ribulose 5-phosphate = (2S)-2-hydroxy-3-oxobutyl phosphate + formate + H(+). The enzyme catalyses GTP + 4 H2O = 2,5-diamino-6-hydroxy-4-(5-phosphoribosylamino)-pyrimidine + formate + 2 phosphate + 3 H(+). The protein operates within cofactor biosynthesis; riboflavin biosynthesis; 2-hydroxy-3-oxobutyl phosphate from D-ribulose 5-phosphate: step 1/1. It functions in the pathway cofactor biosynthesis; riboflavin biosynthesis; 5-amino-6-(D-ribitylamino)uracil from GTP: step 1/4. Its function is as follows. Catalyzes the conversion of D-ribulose 5-phosphate to formate and 3,4-dihydroxy-2-butanone 4-phosphate. In terms of biological role, catalyzes the conversion of GTP to 2,5-diamino-6-ribosylamino-4(3H)-pyrimidinone 5'-phosphate (DARP), formate and pyrophosphate. This is Riboflavin biosynthesis protein RibBA from Actinobacillus pleuropneumoniae serotype 7 (strain AP76).